Consider the following 214-residue polypeptide: Holliday junction branch migration complex subunit RuvA (214 aa).

A domain I region spans residues Met-1 to Pro-63. A domain II region spans residues Gly-64–Arg-139. The tract at residues Arg-139–Ser-143 is flexible linker. Positions Ala-144–Arg-214 are domain III.

This sequence belongs to the RuvA family. Homotetramer. Forms an RuvA(8)-RuvB(12)-Holliday junction (HJ) complex. HJ DNA is sandwiched between 2 RuvA tetramers; dsDNA enters through RuvA and exits via RuvB. An RuvB hexamer assembles on each DNA strand where it exits the tetramer. Each RuvB hexamer is contacted by two RuvA subunits (via domain III) on 2 adjacent RuvB subunits; this complex drives branch migration. In the full resolvosome a probable DNA-RuvA(4)-RuvB(12)-RuvC(2) complex forms which resolves the HJ.

It localises to the cytoplasm. Functionally, the RuvA-RuvB-RuvC complex processes Holliday junction (HJ) DNA during genetic recombination and DNA repair, while the RuvA-RuvB complex plays an important role in the rescue of blocked DNA replication forks via replication fork reversal (RFR). RuvA specifically binds to HJ cruciform DNA, conferring on it an open structure. The RuvB hexamer acts as an ATP-dependent pump, pulling dsDNA into and through the RuvAB complex. HJ branch migration allows RuvC to scan DNA until it finds its consensus sequence, where it cleaves and resolves the cruciform DNA. The chain is Holliday junction branch migration complex subunit RuvA from Clavibacter sepedonicus (Clavibacter michiganensis subsp. sepedonicus).